The sequence spans 709 residues: Polyribonucleotide nucleotidyltransferase (709 aa).

Residues Asp-487 and Asp-493 each coordinate Mg(2+). The 60-residue stretch at 554 to 613 folds into the KH domain; the sequence is PRIHTMKISVEKIKDVIGKGGAVIRQLTEETGTTIEIEDDGTIKIAATDGDQAKEAIRRI. The 69-residue stretch at 623-691 folds into the S1 motif domain; that stretch reads GVIYTGKVAR…RQGRVRLSMK (69 aa).

This sequence belongs to the polyribonucleotide nucleotidyltransferase family. In terms of assembly, component of the RNA degradosome, which is a multiprotein complex involved in RNA processing and mRNA degradation. It depends on Mg(2+) as a cofactor.

The protein resides in the cytoplasm. The enzyme catalyses RNA(n+1) + phosphate = RNA(n) + a ribonucleoside 5'-diphosphate. In terms of biological role, involved in mRNA degradation. Catalyzes the phosphorolysis of single-stranded polyribonucleotides processively in the 3'- to 5'-direction. The polypeptide is Polyribonucleotide nucleotidyltransferase (Vibrio cholerae serotype O1 (strain ATCC 39315 / El Tor Inaba N16961)).